The primary structure comprises 70 residues: Large ribosomal subunit protein uL29 (70 aa).

It belongs to the universal ribosomal protein uL29 family.

The chain is Large ribosomal subunit protein uL29 from Prochlorococcus marinus (strain MIT 9211).